A 74-amino-acid polypeptide reads, in one-letter code: Protein kish-B (74 aa).

An N-terminal signal peptide occupies residues 1 to 22; it reads MTNVYSLDGILVFGLLFVCTCA. The Extracellular segment spans residues 23–52; it reads YFKKVPRLKTWLLSEKKGVWGVFYKAAVIG. Residues 53–73 form a helical membrane-spanning segment; that stretch reads TRLHAAVAIACIVMAFYVLFI. A topological domain (cytoplasmic) is located at residue lysine 74.

The protein belongs to the KISH family.

It is found in the golgi apparatus membrane. Functionally, involved in the early part of the secretory pathway. The protein is Protein kish-B (TMEM167B) of Bos taurus (Bovine).